The primary structure comprises 711 residues: Ribosomal RNA large subunit methyltransferase K/L (711 aa).

The 112-residue stretch at Leu43 to Phe154 folds into the THUMP domain.

Belongs to the methyltransferase superfamily. RlmKL family.

The protein resides in the cytoplasm. It carries out the reaction guanosine(2445) in 23S rRNA + S-adenosyl-L-methionine = N(2)-methylguanosine(2445) in 23S rRNA + S-adenosyl-L-homocysteine + H(+). The enzyme catalyses guanosine(2069) in 23S rRNA + S-adenosyl-L-methionine = N(2)-methylguanosine(2069) in 23S rRNA + S-adenosyl-L-homocysteine + H(+). Specifically methylates the guanine in position 2445 (m2G2445) and the guanine in position 2069 (m7G2069) of 23S rRNA. In Shewanella pealeana (strain ATCC 700345 / ANG-SQ1), this protein is Ribosomal RNA large subunit methyltransferase K/L.